A 370-amino-acid chain; its full sequence is Cysteine synthase 1 (370 aa).

The transit peptide at 1–16 (MFRQSVRRFATAALRS) directs the protein to the mitochondrion. Lys-73 is modified (N6-(pyridoxal phosphate)lysine). Pyridoxal 5'-phosphate is bound by residues Asn-103, 209–213 (GTGGT), and Ser-308.

Belongs to the cysteine synthase/cystathionine beta-synthase family. Requires pyridoxal 5'-phosphate as cofactor.

The protein localises to the mitochondrion. It catalyses the reaction O-succinyl-L-serine + hydrogen sulfide = L-cysteine + succinate. The enzyme catalyses O-acetyl-L-serine + hydrogen sulfide = L-cysteine + acetate. It participates in amino-acid biosynthesis; L-cysteine biosynthesis; L-cysteine from L-serine: step 2/2. Catalyzes the conversion of O-succinyl-L-serine into cysteine, the last step in the cysteine biosynthesis pathway. Can also use O-acetyl-L-serine. This is Cysteine synthase 1 from Emericella nidulans (strain FGSC A4 / ATCC 38163 / CBS 112.46 / NRRL 194 / M139) (Aspergillus nidulans).